Reading from the N-terminus, the 450-residue chain is UDP-N-acetylmuramoylalanine--D-glutamate ligase (450 aa).

112 to 118 serves as a coordination point for ATP; the sequence is GSNGKTT.

Belongs to the MurCDEF family.

It is found in the cytoplasm. It carries out the reaction UDP-N-acetyl-alpha-D-muramoyl-L-alanine + D-glutamate + ATP = UDP-N-acetyl-alpha-D-muramoyl-L-alanyl-D-glutamate + ADP + phosphate + H(+). It participates in cell wall biogenesis; peptidoglycan biosynthesis. In terms of biological role, cell wall formation. Catalyzes the addition of glutamate to the nucleotide precursor UDP-N-acetylmuramoyl-L-alanine (UMA). This chain is UDP-N-acetylmuramoylalanine--D-glutamate ligase, found in Cytophaga hutchinsonii (strain ATCC 33406 / DSM 1761 / CIP 103989 / NBRC 15051 / NCIMB 9469 / D465).